Consider the following 607-residue polypeptide: Ceramide kinase (607 aa).

Residues 135-358 enclose the DAGKc domain; the sequence is DRPKSLMVFV…LDIAQVVRWK (224 aa). ATP contacts are provided by residues 145-149, Thr-176, and 205-211; these read HPLCG and GDGLFNE. 204–207 contributes to the substrate binding site; sequence GGDG. The active-site Proton donor/acceptor is the Asp-206. The interval 247-297 is disordered; sequence NDLSNSELTGDDANAISGSSNTPDDHEPLLSTTRSTGLDISSSDSSDEPCN. The segment covering 276–286 has biased composition (polar residues); the sequence is LSTTRSTGLDI. Ser-320 contacts ATP. Residues 454 to 461 carry the CXXXCXXC motif; that stretch reads CRTNCLIC.

The cofactor is Ca(2+). It depends on Mg(2+) as a cofactor. As to expression, highly expressed in leaves and at lower levels in stems.

The enzyme catalyses an N-acylsphing-4-enine + ATP = an N-acylsphing-4-enine 1-phosphate + ADP + H(+). Its function is as follows. Catalyzes specifically the phosphorylation of ceramide to form ceramide 1-phosphate. Possesses activity on ceramide analog (C6 synthetic ceramide) in vitro. Ceramide is a critical sphingolipid metabolite that induces programmed cell death (PCD) in plants and ceramide-1-phosphate has a PCD suppressive effect. Thus, ceramide phosphorylation plays a role in the modulation of PCD and CERK activity is crucial for the maintenance of cell viability. In Oryza sativa subsp. japonica (Rice), this protein is Ceramide kinase (CERK).